Consider the following 119-residue polypeptide: Large ribosomal subunit protein uL14 (119 aa).

It belongs to the universal ribosomal protein uL14 family. In terms of assembly, part of the 50S ribosomal subunit. Forms a cluster with proteins L3 and L19. In the 70S ribosome, L14 and L19 interact and together make contacts with the 16S rRNA in bridges B5 and B8.

Binds to 23S rRNA. Forms part of two intersubunit bridges in the 70S ribosome. The chain is Large ribosomal subunit protein uL14 from Neorickettsia sennetsu (strain ATCC VR-367 / Miyayama) (Ehrlichia sennetsu).